The primary structure comprises 340 residues: CaiB/baiF CoA-transferase family protein ZK892.4 (340 aa).

Asp-154 (nucleophile) is an active-site residue.

The protein belongs to the CoA-transferase III family.

The polypeptide is CaiB/baiF CoA-transferase family protein ZK892.4 (Caenorhabditis elegans).